A 381-amino-acid polypeptide reads, in one-letter code: Dual-specificity RNA methyltransferase RlmN (381 aa).

The active-site Proton acceptor is the Glu-96. The 241-residue stretch at 102–342 folds into the Radical SAM core domain; it reads TDDRGTLCVS…TRTTRGDDID (241 aa). Cys-109 and Cys-345 are joined by a disulfide. Residues Cys-116, Cys-120, and Cys-123 each contribute to the [4Fe-4S] cluster site. S-adenosyl-L-methionine-binding positions include 170 to 171, Ser-202, 224 to 226, and Asn-302; these read GE and SLH. The active-site S-methylcysteine intermediate is the Cys-345.

Belongs to the radical SAM superfamily. RlmN family. Requires [4Fe-4S] cluster as cofactor.

It localises to the cytoplasm. The catalysed reaction is adenosine(2503) in 23S rRNA + 2 reduced [2Fe-2S]-[ferredoxin] + 2 S-adenosyl-L-methionine = 2-methyladenosine(2503) in 23S rRNA + 5'-deoxyadenosine + L-methionine + 2 oxidized [2Fe-2S]-[ferredoxin] + S-adenosyl-L-homocysteine. It catalyses the reaction adenosine(37) in tRNA + 2 reduced [2Fe-2S]-[ferredoxin] + 2 S-adenosyl-L-methionine = 2-methyladenosine(37) in tRNA + 5'-deoxyadenosine + L-methionine + 2 oxidized [2Fe-2S]-[ferredoxin] + S-adenosyl-L-homocysteine. In terms of biological role, specifically methylates position 2 of adenine 2503 in 23S rRNA and position 2 of adenine 37 in tRNAs. m2A2503 modification seems to play a crucial role in the proofreading step occurring at the peptidyl transferase center and thus would serve to optimize ribosomal fidelity. This is Dual-specificity RNA methyltransferase RlmN from Pseudomonas putida (strain GB-1).